We begin with the raw amino-acid sequence, 1551 residues long: Pentafunctional AROM polypeptide 1 (1551 aa).

The interval 1–379 (MSIEKVSILG…YESKAHQIFK (379 aa)) is 3-dehydroquinate synthase. NAD(+) is bound by residues 42–44 (DTN), 80–83 (ENHK), 111–113 (GGV), and Asp-116. Arg-127 is a binding site for 7-phospho-2-dehydro-3-deoxy-D-arabino-heptonate. Residue 136 to 137 (TT) coordinates NAD(+). Asp-143 and Lys-149 together coordinate 7-phospho-2-dehydro-3-deoxy-D-arabino-heptonate. Position 158 (Lys-158) interacts with NAD(+). Residue Asn-159 coordinates 7-phospho-2-dehydro-3-deoxy-D-arabino-heptonate. NAD(+)-binding positions include 176-179 (FLQT) and Asn-187. Glu-191 is a binding site for Zn(2+). 7-phospho-2-dehydro-3-deoxy-D-arabino-heptonate is bound by residues 191–194 (EVVK) and Lys-243. Glu-253 serves as the catalytic Proton acceptor; for 3-dehydroquinate synthase activity. Residues 257–261 (RNLLN) and His-264 each bind 7-phospho-2-dehydro-3-deoxy-D-arabino-heptonate. Residue His-264 coordinates Zn(2+). The active-site Proton acceptor; for 3-dehydroquinate synthase activity is His-268. The 7-phospho-2-dehydro-3-deoxy-D-arabino-heptonate site is built by His-280 and Lys-351. A Zn(2+)-binding site is contributed by His-280. Positions 392-835 (VHPFANRHPE…WDVLHSKFNA (444 aa)) are EPSP synthase. Residues 854–1044 (DRSIVIIGMR…LPATRSTFVT (191 aa)) are shikimate kinase. 861–868 (GMRAAGKT) is an ATP binding site. The 3-dehydroquinase stretch occupies residues 1045 to 1258 (LTYPDLRKVP…IGVGQLSLKE (214 aa)). His-1162 acts as the Proton acceptor; for 3-dehydroquinate dehydratase activity in catalysis. Catalysis depends on Lys-1191, which acts as the Schiff-base intermediate with substrate; for 3-dehydroquinate dehydratase activity. The segment at 1271–1551 (EKEFWVVGSP…KVIHSAVLNE (281 aa)) is shikimate dehydrogenase.

It in the N-terminal section; belongs to the sugar phosphate cyclases superfamily. Dehydroquinate synthase family. This sequence in the 2nd section; belongs to the EPSP synthase family. In the 3rd section; belongs to the shikimate kinase family. The protein in the 4th section; belongs to the type-I 3-dehydroquinase family. It in the C-terminal section; belongs to the shikimate dehydrogenase family. As to quaternary structure, homodimer. Zn(2+) is required as a cofactor.

It is found in the cytoplasm. The enzyme catalyses 7-phospho-2-dehydro-3-deoxy-D-arabino-heptonate = 3-dehydroquinate + phosphate. It carries out the reaction 3-dehydroquinate = 3-dehydroshikimate + H2O. The catalysed reaction is shikimate + NADP(+) = 3-dehydroshikimate + NADPH + H(+). It catalyses the reaction shikimate + ATP = 3-phosphoshikimate + ADP + H(+). The enzyme catalyses 3-phosphoshikimate + phosphoenolpyruvate = 5-O-(1-carboxyvinyl)-3-phosphoshikimate + phosphate. The protein operates within metabolic intermediate biosynthesis; chorismate biosynthesis; chorismate from D-erythrose 4-phosphate and phosphoenolpyruvate: step 2/7. Its pathway is metabolic intermediate biosynthesis; chorismate biosynthesis; chorismate from D-erythrose 4-phosphate and phosphoenolpyruvate: step 3/7. It participates in metabolic intermediate biosynthesis; chorismate biosynthesis; chorismate from D-erythrose 4-phosphate and phosphoenolpyruvate: step 4/7. It functions in the pathway metabolic intermediate biosynthesis; chorismate biosynthesis; chorismate from D-erythrose 4-phosphate and phosphoenolpyruvate: step 5/7. The protein operates within metabolic intermediate biosynthesis; chorismate biosynthesis; chorismate from D-erythrose 4-phosphate and phosphoenolpyruvate: step 6/7. In terms of biological role, the AROM polypeptide catalyzes 5 consecutive enzymatic reactions in prechorismate polyaromatic amino acid biosynthesis. This chain is Pentafunctional AROM polypeptide 1, found in Lodderomyces elongisporus (strain ATCC 11503 / CBS 2605 / JCM 1781 / NBRC 1676 / NRRL YB-4239) (Yeast).